Here is a 457-residue protein sequence, read N- to C-terminus: Siroheme synthase (457 aa).

The precorrin-2 dehydrogenase /sirohydrochlorin ferrochelatase stretch occupies residues 1-204 (MDHLPIFCQL…NDQKAITETT (204 aa)). Residues 22 to 23 (DV) and 43 to 44 (LA) contribute to the NAD(+) site. Ser128 bears the Phosphoserine mark. The uroporphyrinogen-III C-methyltransferase stretch occupies residues 216 to 457 (GEVVLVGAGP…RDKLNWFSNH (242 aa)). An S-adenosyl-L-methionine-binding site is contributed by Pro225. Residue Asp248 is the Proton acceptor of the active site. Catalysis depends on Lys270, which acts as the Proton donor. S-adenosyl-L-methionine is bound by residues 301–303 (GGD), Ile306, 331–332 (TA), Met382, and Gly411.

It in the N-terminal section; belongs to the precorrin-2 dehydrogenase / sirohydrochlorin ferrochelatase family. The protein in the C-terminal section; belongs to the precorrin methyltransferase family.

It catalyses the reaction uroporphyrinogen III + 2 S-adenosyl-L-methionine = precorrin-2 + 2 S-adenosyl-L-homocysteine + H(+). The catalysed reaction is precorrin-2 + NAD(+) = sirohydrochlorin + NADH + 2 H(+). The enzyme catalyses siroheme + 2 H(+) = sirohydrochlorin + Fe(2+). The protein operates within cofactor biosynthesis; adenosylcobalamin biosynthesis; precorrin-2 from uroporphyrinogen III: step 1/1. Its pathway is cofactor biosynthesis; adenosylcobalamin biosynthesis; sirohydrochlorin from precorrin-2: step 1/1. It functions in the pathway porphyrin-containing compound metabolism; siroheme biosynthesis; precorrin-2 from uroporphyrinogen III: step 1/1. It participates in porphyrin-containing compound metabolism; siroheme biosynthesis; siroheme from sirohydrochlorin: step 1/1. The protein operates within porphyrin-containing compound metabolism; siroheme biosynthesis; sirohydrochlorin from precorrin-2: step 1/1. Functionally, multifunctional enzyme that catalyzes the SAM-dependent methylations of uroporphyrinogen III at position C-2 and C-7 to form precorrin-2 via precorrin-1. Then it catalyzes the NAD-dependent ring dehydrogenation of precorrin-2 to yield sirohydrochlorin. Finally, it catalyzes the ferrochelation of sirohydrochlorin to yield siroheme. This is Siroheme synthase from Escherichia coli O45:K1 (strain S88 / ExPEC).